Here is a 104-residue protein sequence, read N- to C-terminus: MQRLCVYVLILALALATFSEASWKPRSRLQDAPSGPGANRGLEPHGLDQLGPASHHRRQLGLQGPPQLVADLSKKQGPWMEEEEAAYGWMDFGRRSAEEGDQRP.

Residues 1–21 (MQRLCVYVLILALALATFSEA) form the signal peptide. The propeptide occupies 22–58 (SWKPRSRLQDAPSGPGANRGLEPHGLDQLGPASHHRR). Residues 22 to 70 (SWKPRSRLQDAPSGPGANRGLEPHGLDQLGPASHHRRQLGLQGPPQLVA) form a disordered region. 2 positions are modified to pyrrolidone carboxylic acid: Q59 and Q76. Y87 carries the sulfotyrosine modification. F92 bears the Phenylalanine amide mark. S96 is modified (phosphoserine). A propeptide spanning residues 96 to 104 (SAEEGDQRP) is cleaved from the precursor.

The protein belongs to the gastrin/cholecystokinin family.

The protein localises to the secreted. Its function is as follows. Gastrin stimulates the stomach mucosa to produce and secrete hydrochloric acid and the pancreas to secrete its digestive enzymes. It also stimulates smooth muscle contraction and increases blood circulation and water secretion in the stomach and intestine. In Canis lupus familiaris (Dog), this protein is Gastrin (GAST).